The sequence spans 259 residues: 5'-nucleotidase SurE (259 aa).

Positions 8, 9, 40, and 92 each coordinate a divalent metal cation.

This sequence belongs to the SurE nucleotidase family. The cofactor is a divalent metal cation.

It localises to the cytoplasm. It catalyses the reaction a ribonucleoside 5'-phosphate + H2O = a ribonucleoside + phosphate. Its function is as follows. Nucleotidase that shows phosphatase activity on nucleoside 5'-monophosphates. The polypeptide is 5'-nucleotidase SurE (Xanthomonas campestris pv. campestris (strain 8004)).